A 230-amino-acid chain; its full sequence is Probable GTP-binding protein EngB (230 aa).

In terms of domain architecture, EngB-type G spans 36 to 224 (ERPKVIVMGR…KHRINKRINI (189 aa)). GTP contacts are provided by residues 44–51 (GRSNVGKS), 69–73 (GVTLK), 86–89 (DLPG), 166–169 (NKMD), and 201–203 (VPA). The Mg(2+) site is built by serine 51 and threonine 71.

This sequence belongs to the TRAFAC class TrmE-Era-EngA-EngB-Septin-like GTPase superfamily. EngB GTPase family. Mg(2+) is required as a cofactor.

Its function is as follows. Necessary for normal cell division and for the maintenance of normal septation. The sequence is that of Probable GTP-binding protein EngB from Methanococcus maripaludis (strain DSM 14266 / JCM 13030 / NBRC 101832 / S2 / LL).